Reading from the N-terminus, the 90-residue chain is Small ribosomal subunit protein uS19 (90 aa).

Belongs to the universal ribosomal protein uS19 family.

Functionally, protein S19 forms a complex with S13 that binds strongly to the 16S ribosomal RNA. This Nitrosococcus oceani (strain ATCC 19707 / BCRC 17464 / JCM 30415 / NCIMB 11848 / C-107) protein is Small ribosomal subunit protein uS19.